A 120-amino-acid chain; its full sequence is Protein VraC (120 aa).

The polypeptide is Protein VraC (Staphylococcus epidermidis (strain ATCC 12228 / FDA PCI 1200)).